A 631-amino-acid polypeptide reads, in one-letter code: 1-deoxy-D-xylulose-5-phosphate synthase (631 aa).

Residues His87 and 128 to 130 (GHS) contribute to the thiamine diphosphate site. Asp159 provides a ligand contact to Mg(2+). Thiamine diphosphate is bound by residues 160–161 (GA), Asn188, Phe295, and Glu377. Asn188 serves as a coordination point for Mg(2+).

Belongs to the transketolase family. DXPS subfamily. Homodimer. Mg(2+) serves as cofactor. Thiamine diphosphate is required as a cofactor.

It carries out the reaction D-glyceraldehyde 3-phosphate + pyruvate + H(+) = 1-deoxy-D-xylulose 5-phosphate + CO2. Its pathway is metabolic intermediate biosynthesis; 1-deoxy-D-xylulose 5-phosphate biosynthesis; 1-deoxy-D-xylulose 5-phosphate from D-glyceraldehyde 3-phosphate and pyruvate: step 1/1. Its function is as follows. Catalyzes the acyloin condensation reaction between C atoms 2 and 3 of pyruvate and glyceraldehyde 3-phosphate to yield 1-deoxy-D-xylulose-5-phosphate (DXP). The chain is 1-deoxy-D-xylulose-5-phosphate synthase from Pseudomonas putida (strain ATCC 700007 / DSM 6899 / JCM 31910 / BCRC 17059 / LMG 24140 / F1).